We begin with the raw amino-acid sequence, 93 residues long: Small ribosomal subunit protein bS20 (93 aa).

Over residues 1 to 11 (MPQHKSAEKRV) the composition is skewed to basic and acidic residues. The tract at residues 1 to 23 (MPQHKSAEKRVRQSKRRNARNRV) is disordered. Basic residues predominate over residues 12–23 (RQSKRRNARNRV).

It belongs to the bacterial ribosomal protein bS20 family.

Functionally, binds directly to 16S ribosomal RNA. The polypeptide is Small ribosomal subunit protein bS20 (Chloroherpeton thalassium (strain ATCC 35110 / GB-78)).